The chain runs to 607 residues: Elongation factor 4 (607 aa).

Positions 11 to 193 (EKIRNFSIIA…QIVEKVPAPQ (183 aa)) constitute a tr-type G domain. Residues 23-28 (DHGKST) and 140-143 (NKID) each bind GTP.

The protein belongs to the TRAFAC class translation factor GTPase superfamily. Classic translation factor GTPase family. LepA subfamily.

It localises to the cell membrane. It carries out the reaction GTP + H2O = GDP + phosphate + H(+). Required for accurate and efficient protein synthesis under certain stress conditions. May act as a fidelity factor of the translation reaction, by catalyzing a one-codon backward translocation of tRNAs on improperly translocated ribosomes. Back-translocation proceeds from a post-translocation (POST) complex to a pre-translocation (PRE) complex, thus giving elongation factor G a second chance to translocate the tRNAs correctly. Binds to ribosomes in a GTP-dependent manner. The sequence is that of Elongation factor 4 from Lactococcus lactis subsp. cremoris (strain MG1363).